A 103-amino-acid polypeptide reads, in one-letter code: NADH-quinone oxidoreductase subunit K (103 aa).

Helical transmembrane passes span 6–26 (LAHY…GIFL), 32–52 (IVLL…FVAF), and 63–83 (VFVF…LAIL).

Belongs to the complex I subunit 4L family. In terms of assembly, NDH-1 is composed of 14 different subunits. Subunits NuoA, H, J, K, L, M, N constitute the membrane sector of the complex.

It is found in the cell inner membrane. It catalyses the reaction a quinone + NADH + 5 H(+)(in) = a quinol + NAD(+) + 4 H(+)(out). Its function is as follows. NDH-1 shuttles electrons from NADH, via FMN and iron-sulfur (Fe-S) centers, to quinones in the respiratory chain. The immediate electron acceptor for the enzyme in this species is believed to be ubiquinone. Couples the redox reaction to proton translocation (for every two electrons transferred, four hydrogen ions are translocated across the cytoplasmic membrane), and thus conserves the redox energy in a proton gradient. This Ralstonia pickettii (strain 12D) protein is NADH-quinone oxidoreductase subunit K.